The primary structure comprises 155 residues: MAPKAEKKPAAKKPAEEEPAAEKAEKAPAGKKPKAEKRLPAGKGEKGSGEGKKDRAGRKKAKKSVETYKIYIFKVLKQVHPDIGISSKAMSIMNSFINDIFEKLAAEAAKLARYNKKPTITSREIQTSVRLVLPGELAKHAVSEGTKAVTKFTSA.

2 stretches are compositionally biased toward basic and acidic residues: residues 1–28 (MAPK…EKAP) and 36–54 (EKRL…GKKD). The segment at 1–63 (MAPKAEKKPA…DRAGRKKAKK (63 aa)) is disordered. An N6-acetyllysine mark is found at Lys7 and Lys37. Lys151 participates in a covalent cross-link: Glycyl lysine isopeptide (Lys-Gly) (interchain with G-Cter in ubiquitin).

It belongs to the histone H2B family. The nucleosome is a histone octamer containing two molecules each of H2A, H2B, H3 and H4 assembled in one H3-H4 heterotetramer and two H2A-H2B heterodimers. The octamer wraps approximately 147 bp of DNA. In terms of processing, can be acetylated to form H2BK6ac and H2BK33ac. Monoubiquitinated by BRE1 to form H2BK143ub1 and deubiquitinated by UBP26. Required for heterochromatic histone H3 di- and trimethylation at H3K4me. May give a specific tag for epigenetic transcriptional activation.

Its subcellular location is the nucleus. It localises to the chromosome. Its function is as follows. Core component of nucleosome. Nucleosomes wrap and compact DNA into chromatin, limiting DNA accessibility to the cellular machineries which require DNA as a template. Histones thereby play a central role in transcription regulation, DNA repair, DNA replication and chromosomal stability. DNA accessibility is regulated via a complex set of post-translational modifications of histones, also called histone code, and nucleosome remodeling. The protein is Histone H2B.5 (H2B.5) of Oryza sativa subsp. japonica (Rice).